Consider the following 404-residue polypeptide: LL-diaminopimelate aminotransferase (404 aa).

Substrate-binding residues include tyrosine 15 and glycine 42. Pyridoxal 5'-phosphate contacts are provided by residues tyrosine 72, 108-109 (AK), tyrosine 132, asparagine 188, tyrosine 219, and 247-249 (SFS). Residues lysine 109, tyrosine 132, and asparagine 188 each contribute to the substrate site. Lysine 250 is subject to N6-(pyridoxal phosphate)lysine. Arginine 258 and asparagine 288 together coordinate pyridoxal 5'-phosphate. Positions 288 and 384 each coordinate substrate.

This sequence belongs to the class-I pyridoxal-phosphate-dependent aminotransferase family. LL-diaminopimelate aminotransferase subfamily. Homodimer. Pyridoxal 5'-phosphate is required as a cofactor.

The catalysed reaction is (2S,6S)-2,6-diaminopimelate + 2-oxoglutarate = (S)-2,3,4,5-tetrahydrodipicolinate + L-glutamate + H2O + H(+). It functions in the pathway amino-acid biosynthesis; L-lysine biosynthesis via DAP pathway; LL-2,6-diaminopimelate from (S)-tetrahydrodipicolinate (aminotransferase route): step 1/1. In terms of biological role, involved in the synthesis of meso-diaminopimelate (m-DAP or DL-DAP), required for both lysine and peptidoglycan biosynthesis. Catalyzes the direct conversion of tetrahydrodipicolinate to LL-diaminopimelate. The polypeptide is LL-diaminopimelate aminotransferase (Lachnospira eligens (strain ATCC 27750 / DSM 3376 / VPI C15-48 / C15-B4) (Eubacterium eligens)).